The chain runs to 270 residues: Hydroxyethylthiazole kinase (270 aa).

Methionine 47 is a binding site for substrate. ATP contacts are provided by arginine 123 and threonine 169. Glycine 196 lines the substrate pocket.

The protein belongs to the Thz kinase family. Requires Mg(2+) as cofactor.

It carries out the reaction 5-(2-hydroxyethyl)-4-methylthiazole + ATP = 4-methyl-5-(2-phosphooxyethyl)-thiazole + ADP + H(+). It functions in the pathway cofactor biosynthesis; thiamine diphosphate biosynthesis; 4-methyl-5-(2-phosphoethyl)-thiazole from 5-(2-hydroxyethyl)-4-methylthiazole: step 1/1. Catalyzes the phosphorylation of the hydroxyl group of 4-methyl-5-beta-hydroxyethylthiazole (THZ). This chain is Hydroxyethylthiazole kinase, found in Roseiflexus sp. (strain RS-1).